The following is a 101-amino-acid chain: Small ribosomal subunit protein uS14A (101 aa).

It belongs to the universal ribosomal protein uS14 family. As to quaternary structure, part of the 30S ribosomal subunit. Contacts proteins S3 and S10.

In terms of biological role, binds 16S rRNA, required for the assembly of 30S particles and may also be responsible for determining the conformation of the 16S rRNA at the A site. This is Small ribosomal subunit protein uS14A from Mycolicibacterium smegmatis (strain ATCC 700084 / mc(2)155) (Mycobacterium smegmatis).